Reading from the N-terminus, the 356-residue chain is Leucoanthocyanidin dioxygenase (356 aa).

Substrate is bound by residues Y142 and K213. Positions 208–307 constitute a Fe2OG dioxygenase domain; sequence LLLQMKINYY…RISWAVFCEP (100 aa). 215–217 contributes to the 2-oxoglutarate binding site; it reads NYY. H232 contacts Fe cation. Residue T233 participates in substrate binding. Positions 234 and 288 each coordinate Fe cation. Residue 298–300 coordinates 2-oxoglutarate; sequence RIS. Substrate-binding residues include E306 and K341.

This sequence belongs to the iron/ascorbate-dependent oxidoreductase family. It depends on L-ascorbate as a cofactor. The cofactor is Fe(2+). Expressed in young seedlings (at protein level).

It carries out the reaction a (2R,3S,4S)-leucoanthocyanidin + 2-oxoglutarate + O2 = a 4-H-anthocyanidin with a 3-hydroxy group + succinate + CO2 + 2 H2O. It catalyses the reaction (2R,3S,4S)-3,4-leucopelargonidin + 2-oxoglutarate + O2 = (4S)-2,3-dehydroleucopelargonidin + succinate + CO2 + H2O + H(+). The catalysed reaction is (2R,3S,4S)-leucocyanidin + 2-oxoglutarate + O2 = (4S)-2,3-dehydroleucocyanidin + succinate + CO2 + H2O + H(+). It functions in the pathway pigment biosynthesis; anthocyanin biosynthesis. Involved in anthocyanin and protoanthocyanidin biosynthesis by catalyzing the oxidation of leucoanthocyanidins into anthocyanidins. Possesses low flavonol synthase activity in vitro towards dihydrokaempferol and dihydroquercetin producing kaempferol and quercitin, respectively. The sequence is that of Leucoanthocyanidin dioxygenase (LDOX) from Arabidopsis thaliana (Mouse-ear cress).